The sequence spans 201 residues: Probable molybdenum cofactor guanylyltransferase (201 aa).

GTP-binding positions include 16 to 18 (LAG), K28, D75, and D107. D107 is a binding site for Mg(2+).

It belongs to the MobA family. Mg(2+) is required as a cofactor.

It localises to the cytoplasm. The enzyme catalyses Mo-molybdopterin + GTP + H(+) = Mo-molybdopterin guanine dinucleotide + diphosphate. Its function is as follows. Transfers a GMP moiety from GTP to Mo-molybdopterin (Mo-MPT) cofactor (Moco or molybdenum cofactor) to form Mo-molybdopterin guanine dinucleotide (Mo-MGD) cofactor. In Mycobacterium bovis (strain ATCC BAA-935 / AF2122/97), this protein is Probable molybdenum cofactor guanylyltransferase.